A 172-amino-acid chain; its full sequence is Thioredoxin Y1, chloroplastic (172 aa).

The transit peptide at 1 to 62 directs the protein to the chloroplast; sequence MASISLSSST…SSTTRCTPRR (62 aa). Residues 63-169 enclose the Thioredoxin domain; it reads IEAKKQTFDS…LIQRIEDSLK (107 aa). Catalysis depends on nucleophile residues Cys-93 and Cys-96. An intrachain disulfide couples Cys-93 to Cys-96.

The protein belongs to the thioredoxin family. Plant Y-type subfamily. As to expression, expressed in roots and seeds.

Its subcellular location is the plastid. It is found in the chloroplast stroma. In terms of biological role, thiol-disulfide oxidoreductase that poorly activates chloroplastic malate dehydrogenase (NADP-MDH) and fructose-1,6-bisphosphatase. Provides reducing equivalents for peroxiredoxin Q. The polypeptide is Thioredoxin Y1, chloroplastic (Arabidopsis thaliana (Mouse-ear cress)).